The chain runs to 25 residues: FFGWLIKGAIHAGKAIHGLIHRRRH.

His-25 carries the post-translational modification Histidine amide.

Gill. Localized in certain epithelial cells lining the surface of secondary lamellae and eosinophilic granule cell-like cells at the base of secondary lamellae.

The protein localises to the secreted. Its function is as follows. Has antibacterial activity against Gram-positive bacteria B.subtilis ATCC 6633, L.garvieae ATCC 49156 and S.iniae F-8502, and Gram-negative bacteria E.coli WT-2, V.anguillarum ATCC 19264, V.penaeicida KHA, V.harveyi ATCC 14126, V.vulnificus ATCC 33148, A.salmonicida NCMB 1102 and P.putida ATCC 12633. Has hemolytic activity against human red blood cells. Seems to disrupt the membranes by adopting an alpha helical conformation. May play a significant role in innate host defense. This is Chrysophsin-1 from Pagrus major (Red sea bream).